We begin with the raw amino-acid sequence, 1390 residues long: DNA-directed RNA polymerase subunit beta (1390 aa).

Belongs to the RNA polymerase beta chain family. The RNAP catalytic core consists of 2 alpha, 1 beta, 1 beta' and 1 omega subunit. When a sigma factor is associated with the core the holoenzyme is formed, which can initiate transcription.

The catalysed reaction is RNA(n) + a ribonucleoside 5'-triphosphate = RNA(n+1) + diphosphate. In terms of biological role, DNA-dependent RNA polymerase catalyzes the transcription of DNA into RNA using the four ribonucleoside triphosphates as substrates. This Gluconobacter oxydans (strain 621H) (Gluconobacter suboxydans) protein is DNA-directed RNA polymerase subunit beta.